We begin with the raw amino-acid sequence, 349 residues long: Histidinol-phosphate aminotransferase (349 aa).

The interval 1–22 is disordered; that stretch reads MVSIRPSVRHTPAYVPGEQPQT. K207 is modified (N6-(pyridoxal phosphate)lysine).

It belongs to the class-II pyridoxal-phosphate-dependent aminotransferase family. Histidinol-phosphate aminotransferase subfamily. As to quaternary structure, homodimer. The cofactor is pyridoxal 5'-phosphate.

The enzyme catalyses L-histidinol phosphate + 2-oxoglutarate = 3-(imidazol-4-yl)-2-oxopropyl phosphate + L-glutamate. It participates in amino-acid biosynthesis; L-histidine biosynthesis; L-histidine from 5-phospho-alpha-D-ribose 1-diphosphate: step 7/9. The polypeptide is Histidinol-phosphate aminotransferase (hisC) (Synechocystis sp. (strain ATCC 27184 / PCC 6803 / Kazusa)).